A 335-amino-acid polypeptide reads, in one-letter code: MMSEPVRVGLNGFGRIGRNVFRASLHSDDVEIVGINDVMDDSEIDYFAQYDSVMGELEGASVDDGVLTVDGTDFEAGIFHETDPTQLPWDDLDVDVAFEATGIFRTKEDASQHLDAGADKVLISAPPKGDEPVKQLVYGVNHDEYDGEDVVSNASCTTNSITPVAKVLDEEFGINAGQLTTVHAYTGSQNLMDGPNGKPRRRRAAAENIIPTSTGAAQAATEVLPELEGKLDGMAIRVPVPNGSITEFVVDLDDDVTESDVNAAFEDAAAGELEGVLGVTSDDVVSSDILGDPYSTQVDLQSTNVVSGMTKILTWYDNEYGFSNRMLDVAEYITE.

NAD(+) is bound by residues 15–16 and Asp-37; that span reads RI. D-glyceraldehyde 3-phosphate is bound by residues 155 to 157, Thr-186, Arg-201, 214 to 215, and Arg-237; these read SCT and TG. Cys-156 serves as the catalytic Nucleophile. Positions 301 and 318 each coordinate NAD(+).

This sequence belongs to the glyceraldehyde-3-phosphate dehydrogenase family. In terms of assembly, homotetramer.

The protein localises to the cytoplasm. The catalysed reaction is D-glyceraldehyde 3-phosphate + phosphate + NADP(+) = (2R)-3-phospho-glyceroyl phosphate + NADPH + H(+). The enzyme catalyses D-glyceraldehyde 3-phosphate + phosphate + NAD(+) = (2R)-3-phospho-glyceroyl phosphate + NADH + H(+). Its pathway is carbohydrate degradation; glycolysis; pyruvate from D-glyceraldehyde 3-phosphate: step 1/5. This is Glyceraldehyde-3-phosphate dehydrogenase (gap) from Haloarcula vallismortis (Halobacterium vallismortis).